Here is a 347-residue protein sequence, read N- to C-terminus: NADH-ubiquinone oxidoreductase chain 2 (347 aa).

The next 10 membrane-spanning stretches (helical) occupy residues 3–23 (PMIF…VMMS), 25–45 (HWFM…PVLM), 59–79 (YFLT…INLM), 96–116 (MLIT…FWVP), 122–142 (IPLS…LSLL), 149–169 (INME…GWGG), 201–221 (SFLN…LLIF), 239–259 (IIAT…PLTG), 274–294 (NSTI…FFYI), and 326–346 (ILPL…FLML).

Belongs to the complex I subunit 2 family. As to quaternary structure, core subunit of respiratory chain NADH dehydrogenase (Complex I) which is composed of 45 different subunits. Interacts with TMEM242.

It is found in the mitochondrion inner membrane. It catalyses the reaction a ubiquinone + NADH + 5 H(+)(in) = a ubiquinol + NAD(+) + 4 H(+)(out). In terms of biological role, core subunit of the mitochondrial membrane respiratory chain NADH dehydrogenase (Complex I) that is believed to belong to the minimal assembly required for catalysis. Complex I functions in the transfer of electrons from NADH to the respiratory chain. The immediate electron acceptor for the enzyme is believed to be ubiquinone. In Crocidura hildegardeae (Hildegarde's shrew), this protein is NADH-ubiquinone oxidoreductase chain 2.